A 262-amino-acid polypeptide reads, in one-letter code: Serine O-acetyltransferase (262 aa).

C107 acts as the Acyl-thioester intermediate in catalysis. K128 is a binding site for substrate. Catalysis depends on H200, which acts as the Proton acceptor. E202 is a catalytic residue. Position 214 (R214) interacts with substrate.

It belongs to the MetA family.

It localises to the cytoplasm. It catalyses the reaction L-serine + acetyl-CoA = O-acetyl-L-serine + CoA. It carries out the reaction L-homoserine + acetyl-CoA = O-acetyl-L-homoserine + CoA. The protein operates within amino-acid biosynthesis; L-cysteine biosynthesis; L-cysteine from L-serine: step 1/2. Transfers an acetyl group from acetyl-CoA to L-serine, forming acetyl-L-serine. In vitro, also has homoserine acetyl transferase activity. This chain is Serine O-acetyltransferase, found in Lactobacillus acidophilus.